The primary structure comprises 486 residues: Cardiolipin synthase A (486 aa).

2 helical membrane passes run 3 to 23 (TVYTLVSWLAILGYWLLIAGV) and 38 to 58 (MAWLLIIYILPLVGIIAYLAV). 2 consecutive PLD phosphodiesterase domains span residues 219–246 (MDLRQHRKMIMIDNYIAYTGSMNMVDPR) and 399–426 (EGGLLHTKSVLVDGELSLVGTVNLDMRS). Catalysis depends on residues histidine 224, lysine 226, aspartate 231, histidine 404, lysine 406, and aspartate 411.

The protein belongs to the phospholipase D family. Cardiolipin synthase subfamily. ClsA sub-subfamily.

The protein resides in the cell inner membrane. The enzyme catalyses 2 a 1,2-diacyl-sn-glycero-3-phospho-(1'-sn-glycerol) = a cardiolipin + glycerol. Catalyzes the reversible phosphatidyl group transfer from one phosphatidylglycerol molecule to another to form cardiolipin (CL) (diphosphatidylglycerol) and glycerol. In Escherichia coli O7:K1 (strain IAI39 / ExPEC), this protein is Cardiolipin synthase A.